The following is a 396-amino-acid chain: Purple acid phosphatase 5 (396 aa).

The signal sequence occupies residues 1–13 (MSLETFPPPAGYN). Residue Asn58 is glycosylated (N-linked (GlcNAc...) asparagine). Residue Asp125 coordinates Fe cation. Asn133 is a glycosylation site (N-linked (GlcNAc...) asparagine). Fe cation contacts are provided by Asp153 and Tyr156. Asp153 lines the Zn(2+) pocket. Asn190 is a binding site for Zn(2+). Asn190 serves as a coordination point for substrate. N-linked (GlcNAc...) asparagine glycosylation occurs at Asn238. His250 lines the Zn(2+) pocket. The active-site Proton donor is the His260. Position 287 (His287) interacts with Zn(2+). 287 to 289 (HVH) is a binding site for substrate. His289 contacts Fe cation. Residues Asn303 and Asn360 are each glycosylated (N-linked (GlcNAc...) asparagine).

The protein belongs to the metallophosphoesterase superfamily. Purple acid phosphatase family. In terms of assembly, homodimer. Fe cation is required as a cofactor. The cofactor is Zn(2+).

It localises to the secreted. The enzyme catalyses a phosphate monoester + H2O = an alcohol + phosphate. The protein is Purple acid phosphatase 5 (PAP5) of Arabidopsis thaliana (Mouse-ear cress).